Consider the following 146-residue polypeptide: SGKYISWEDSCSYLQLQKYERCELAKALKKGGLADFKGYSLENWICTAFHESGYNTASTNYNPPDKSTDYGIFQINSRWWCNDYKTPRSKNTCNIDCKVLLGDDISPAIKCAKRVVSDPNGMGAWVAWKKYCKGKNLSQWTQGCKL.

A signal peptide spans 1 to 16; the sequence is SGKYISWEDSCSYLQL. Positions 17 to 146 constitute a C-type lysozyme domain; it reads QKYERCELAK…LSQWTQGCKL (130 aa). 4 cysteine pairs are disulfide-bonded: Cys22–Cys144, Cys46–Cys132, Cys81–Cys97, and Cys93–Cys111. Active-site residues include Glu51 and Asp69.

The protein belongs to the glycosyl hydrolase 22 family. As to expression, expressed by the skin glands.

The protein resides in the secreted. It carries out the reaction Hydrolysis of (1-&gt;4)-beta-linkages between N-acetylmuramic acid and N-acetyl-D-glucosamine residues in a peptidoglycan and between N-acetyl-D-glucosamine residues in chitodextrins.. In terms of biological role, lysozymes have primarily a bacteriolytic function; those in tissues and body fluids are associated with the monocyte-macrophage system and enhance the activity of immunoagents. Has antibacterial activity against the Gram-positive bacterium S.aureus and against the Gram-negative bacterium E.coli with a MIC of 1 uM and 8 uM respectively. No antifungal activity against C.albicans. This Bufo gargarizans andrewsi (Andrew's toad) protein is Lysozyme C.